Here is a 341-residue protein sequence, read N- to C-terminus: L-threonine 3-dehydrogenase (341 aa).

C38 is a Zn(2+) binding site. Active-site charge relay system residues include T40 and H43. Zn(2+) contacts are provided by H63, E64, C93, C96, C99, and C107. NAD(+) contacts are provided by residues I175, D195, R200, 262–264 (LGI), and 286–287 (IY).

It belongs to the zinc-containing alcohol dehydrogenase family. As to quaternary structure, homotetramer. Requires Zn(2+) as cofactor.

It localises to the cytoplasm. The enzyme catalyses L-threonine + NAD(+) = (2S)-2-amino-3-oxobutanoate + NADH + H(+). It functions in the pathway amino-acid degradation; L-threonine degradation via oxydo-reductase pathway; glycine from L-threonine: step 1/2. Catalyzes the NAD(+)-dependent oxidation of L-threonine to 2-amino-3-ketobutyrate. The polypeptide is L-threonine 3-dehydrogenase (Escherichia fergusonii (strain ATCC 35469 / DSM 13698 / CCUG 18766 / IAM 14443 / JCM 21226 / LMG 7866 / NBRC 102419 / NCTC 12128 / CDC 0568-73)).